Consider the following 106-residue polypeptide: Putative double-stranded DNA mimic protein PM0536 (106 aa).

The protein belongs to the putative dsDNA mimic protein family.

May act as a double-stranded DNA (dsDNA) mimic. Probably regulates the activity of a dsDNA-binding protein. This Pasteurella multocida (strain Pm70) protein is Putative double-stranded DNA mimic protein PM0536.